Consider the following 507-residue polypeptide: Probable DNA ligase (507 aa).

Glu209 is a binding site for ATP. Lys211 functions as the N6-AMP-lysine intermediate in the catalytic mechanism. 6 residues coordinate ATP: Arg216, Arg231, Glu260, Phe295, Arg366, and Lys372.

Belongs to the ATP-dependent DNA ligase family. Mg(2+) serves as cofactor.

The enzyme catalyses ATP + (deoxyribonucleotide)n-3'-hydroxyl + 5'-phospho-(deoxyribonucleotide)m = (deoxyribonucleotide)n+m + AMP + diphosphate.. Functionally, DNA ligase that seals nicks in double-stranded DNA during DNA replication, DNA recombination and DNA repair. This is Probable DNA ligase from Pseudarthrobacter chlorophenolicus (strain ATCC 700700 / DSM 12829 / CIP 107037 / JCM 12360 / KCTC 9906 / NCIMB 13794 / A6) (Arthrobacter chlorophenolicus).